The sequence spans 593 residues: NADH-quinone oxidoreductase subunit C/D 1 (593 aa).

An NADH dehydrogenase I subunit C region spans residues 1–193; that stretch reads MPWAKEGDLQ…DNLEGLMNYD (193 aa). An NADH dehydrogenase I subunit D region spans residues 217-593; that stretch reads AQIVLNWGPL…IDPVVGETDR (377 aa).

It in the N-terminal section; belongs to the complex I 30 kDa subunit family. This sequence in the C-terminal section; belongs to the complex I 49 kDa subunit family. In terms of assembly, NDH-1 is composed of 13 different subunits. Subunits NuoB, CD, E, F, and G constitute the peripheral sector of the complex.

Its subcellular location is the cell inner membrane. It carries out the reaction a quinone + NADH + 5 H(+)(in) = a quinol + NAD(+) + 4 H(+)(out). Functionally, NDH-1 shuttles electrons from NADH, via FMN and iron-sulfur (Fe-S) centers, to quinones in the respiratory chain. The immediate electron acceptor for the enzyme in this species is believed to be ubiquinone. Couples the redox reaction to proton translocation (for every two electrons transferred, four hydrogen ions are translocated across the cytoplasmic membrane), and thus conserves the redox energy in a proton gradient. In Aquifex aeolicus (strain VF5), this protein is NADH-quinone oxidoreductase subunit C/D 1 (nuoC1).